A 190-amino-acid chain; its full sequence is Segregation and condensation protein B (190 aa).

It belongs to the ScpB family. As to quaternary structure, homodimer. Homodimerization may be required to stabilize the binding of ScpA to the Smc head domains. Component of a cohesin-like complex composed of ScpA, ScpB and the Smc homodimer, in which ScpA and ScpB bind to the head domain of Smc. The presence of the three proteins is required for the association of the complex with DNA.

The protein resides in the cytoplasm. Participates in chromosomal partition during cell division. May act via the formation of a condensin-like complex containing Smc and ScpA that pull DNA away from mid-cell into both cell halves. This is Segregation and condensation protein B from Bacillus cereus (strain ATCC 14579 / DSM 31 / CCUG 7414 / JCM 2152 / NBRC 15305 / NCIMB 9373 / NCTC 2599 / NRRL B-3711).